A 227-amino-acid polypeptide reads, in one-letter code: LysM and putative peptidoglycan-binding domain-containing protein 1 (227 aa).

Residues Ser-23 and Ser-33 each carry the phosphoserine modification. In terms of domain architecture, LysM spans 40 to 84; it reads LEHQLEPGDTLAGLALKYGVTMEQIKRTNRLYTNDSIFLKKTLYI. The disordered stretch occupies residues 95-157; it reads NGLDSEEEEN…PSHDLSASDF (63 aa). A compositionally biased stretch (acidic residues) spans 98–108; it reads DSEEEENDGEE. The residue at position 99 (Ser-99) is a Phosphoserine. A compositionally biased stretch (polar residues) spans 143-152; the sequence is QGTSTPSHDL. Residues Ser-166, Ser-181, Ser-194, and Ser-212 each carry the phosphoserine modification. Residues 169–227 form a disordered region; the sequence is KKAAAQKLRKGESGVPEEDTGLYPSSPRMQQRAVLGPVPLTRTSRTQTLRDQEDEIFKL. The span at 216–227 shows a compositional bias: basic and acidic residues; the sequence is TLRDQEDEIFKL.

The sequence is that of LysM and putative peptidoglycan-binding domain-containing protein 1 (Lysmd1) from Rattus norvegicus (Rat).